We begin with the raw amino-acid sequence, 452 residues long: Kremen protein 1 (452 aa).

Positions 1–22 (MVMDIWTISLRILLFPSALVLC) are cleaved as a signal peptide. Residues 23 to 369 (SDSFHSECYT…TTSPSRPSGH (347 aa)) are Extracellular-facing. Residues 29-112 (ECYTVNGADY…YWKYCDIPAC (84 aa)) form the Kringle domain. 8 disulfides stabilise this stretch: Cys30/Cys112, Cys53/Cys93, Cys82/Cys107, Cys120/Cys184, Cys145/Cys165, Cys149/Cys167, Cys188/Cys196, and Cys212/Cys238. N-linked (GlcNAc...) asparagine glycans are attached at residues Asn43 and Asn57. The WSC domain maps to 114–208 (MPGNLGCFRD…DGRIILFDSL (95 aa)). In terms of domain architecture, CUB spans 212–319 (CGGNYSTDSA…QGFSVVYEAF (108 aa)). N-linked (GlcNAc...) asparagine glycans are attached at residues Asn215, Asn253, Asn291, Asn328, and Asn344. Residues 370-390 (VPGWTIYALTGLLILTIIAIS) form a helical membrane-spanning segment. Over 391–452 (AKALLHISMK…HDDRNPLVGE (62 aa)) the chain is Cytoplasmic.

In terms of assembly, interacts with lrp6.

The protein resides in the cell membrane. Functionally, receptor for Dickkopf proteins. Cooperates with DKK1/2 proteins to inhibit Wnt/beta-catenin signaling by promoting the endocytosis of Wnt receptors LRP5 and LRP6. In the absence of DKK1, potentiates Wnt-beta-catenin signaling by maintaining LRP5 or LRP6 at the cell membrane. The polypeptide is Kremen protein 1 (kremen1) (Xenopus laevis (African clawed frog)).